We begin with the raw amino-acid sequence, 336 residues long: Carbamoyl dehydratase HypE (336 aa).

Cysteine 336 carries the S-carbamoylcysteine; by HypF; alternate modification. Cysteine 336 is modified (S-cyanocysteine; by autocatalysis; alternate).

Belongs to the HypE family. Homodimer. Forms a complex with HypF. Also forms a complex with HypC, or HybG, and HypD. In terms of processing, modified by HypF, which adds a carboxamido group to the thiolate of the C-terminal cysteine, yielding a protein-S-carboxamide. The carboxamido group is then dehydrated by HypE itself to yield a protein-thiocyanate.

It catalyses the reaction C-terminal S-carboxamide-L-cysteinyl-[HypE protein] + ATP = C-terminal S-cyanate-L-cysteinyl-[HypE protein] + ADP + phosphate + H(+). It participates in protein modification; [NiFe] hydrogenase maturation. Functionally, involved in the maturation of [NiFe] hydrogenases. Along with HypF, it catalyzes the synthesis of the CN ligands of the active site iron of [NiFe]-hydrogenases. HypE catalyzes the ATP-dependent dehydration of the carboxamido group attached to its C-terminal cysteine to a cyano group. The cyano group is then transferred from HypE to the HypC-HypD complex or the HybG-HypD complex. The protein is Carbamoyl dehydratase HypE of Escherichia coli (strain K12).